Reading from the N-terminus, the 145-residue chain is 3-dehydroquinate dehydratase (145 aa).

The Proton acceptor role is filled by Y23. Substrate is bound by residues N74, H80, and D87. H100 functions as the Proton donor in the catalytic mechanism. Residues 101 to 102 (LS) and R111 each bind substrate.

Belongs to the type-II 3-dehydroquinase family. In terms of assembly, homododecamer.

The catalysed reaction is 3-dehydroquinate = 3-dehydroshikimate + H2O. The protein operates within metabolic intermediate biosynthesis; chorismate biosynthesis; chorismate from D-erythrose 4-phosphate and phosphoenolpyruvate: step 3/7. Catalyzes a trans-dehydration via an enolate intermediate. The polypeptide is 3-dehydroquinate dehydratase (Halalkalibacterium halodurans (strain ATCC BAA-125 / DSM 18197 / FERM 7344 / JCM 9153 / C-125) (Bacillus halodurans)).